Reading from the N-terminus, the 90-residue chain is Small ribosomal subunit protein bS20 (90 aa).

It belongs to the bacterial ribosomal protein bS20 family.

Functionally, binds directly to 16S ribosomal RNA. This Desulfitobacterium hafniense (strain DSM 10664 / DCB-2) protein is Small ribosomal subunit protein bS20.